The primary structure comprises 38 residues: Large ribosomal subunit protein bL36 (38 aa).

It belongs to the bacterial ribosomal protein bL36 family.

This Phytoplasma mali (strain AT) protein is Large ribosomal subunit protein bL36.